The following is an 83-amino-acid chain: Hainantoxin-III 12 (83 aa).

The N-terminal stretch at 1 to 21 (MKASMFLALAGLVLLFVVGYA) is a signal peptide. The propeptide occupies 22–48 (SGSEEKEFPRELLSKIFAVDDFKGEER). 3 disulfides stabilise this stretch: Cys-50-Cys-65, Cys-57-Cys-70, and Cys-64-Cys-77. Leucine amide is present on Leu-81.

It belongs to the neurotoxin 10 (Hwtx-1) family. 15 (Hntx-3) subfamily. Monomer. Expressed by the venom gland.

Its subcellular location is the secreted. Selective antagonist of neuronal tetrodotoxin (TTX)-sensitive voltage-gated sodium channels (IC(50)=1270 nM on Nav1.1/SCN1A, 270 nM on Nav1.2/SCN2A, 491 nM on Nav1.3/SCN3A and 232 nM on Nav1.7/SCN9A). This toxin suppress Nav1.7 current amplitude without significantly altering the activation, inactivation, and repriming kinetics. Short extreme depolarizations partially activate the toxin-bound channel, indicating voltage-dependent inhibition of this toxin. This toxin increases the deactivation of the Nav1.7 current after extreme depolarizations. The toxin-Nav1.7 complex is gradually dissociated upon prolonged strong depolarizations in a voltage-dependent manner, and the unbound toxin rebinds to Nav1.7 after a long repolarization. Moreover, analysis of chimeric channels showed that the DIIS3-S4 linker is critical for toxin binding to Nav1.7. These data are consistent with this toxin interacting with Nav1.7 site 4 and trapping the domain II voltage sensor in the closed state. The chain is Hainantoxin-III 12 from Cyriopagopus hainanus (Chinese bird spider).